Reading from the N-terminus, the 307-residue chain is Glycine--tRNA ligase alpha subunit (307 aa).

The protein belongs to the class-II aminoacyl-tRNA synthetase family. In terms of assembly, tetramer of two alpha and two beta subunits.

The protein localises to the cytoplasm. It catalyses the reaction tRNA(Gly) + glycine + ATP = glycyl-tRNA(Gly) + AMP + diphosphate. The protein is Glycine--tRNA ligase alpha subunit of Xylella fastidiosa (strain M23).